The chain runs to 396 residues: Gap junction gamma-1 protein (396 aa).

Topologically, residues 1-22 are cytoplasmic; the sequence is MSWSFLTRLLEEIHNHSTFVGK. The chain crosses the membrane as a helical span at residues 23–45; it reads IWLTVLIVFRIVLTAVGGESIYY. Over 46–75 the chain is Extracellular; that stretch reads DEQSKFVCNTEQPGCENVCYDAFAPLSHVR. A helical transmembrane segment spans residues 76–95; sequence FWVFQIILVATPSVMYLGYA. Residues 96–175 lie on the Cytoplasmic side of the membrane; that stretch reads IHKIAKMEHG…RRIREDGLMK (80 aa). A disordered region spans residues 146–165; the sequence is LESEKENKDQNQSKPKHDGR. Residues 147–156 show a composition bias toward basic and acidic residues; the sequence is ESEKENKDQN. A helical membrane pass occupies residues 176-198; sequence IYVLQLLARTVFEVGFLVGQYFL. Over 199–228 the chain is Extracellular; sequence YGFQVHPFYVCSRLPCPHKIDCFISRPTEK. The helical transmembrane segment at 229–248 threads the bilayer; the sequence is TIFLLIMYGVTGLCLLLNIW. The Cytoplasmic portion of the chain corresponds to 249–396; it reads EMLHLGFGTI…SGDGKTSVWI (148 aa). A disordered region spans residues 356–396; sequence YNHQNNPHGSREKKAKVGSKAGSNKSSASSKSGDGKTSVWI. Low complexity predominate over residues 373–396; that stretch reads GSKAGSNKSSASSKSGDGKTSVWI.

It belongs to the connexin family. Gamma-type subfamily. As to quaternary structure, a connexon is composed of a hexamer of connexins. Interacts with CNST.

It localises to the cell membrane. The protein resides in the cell junction. It is found in the gap junction. In terms of biological role, one gap junction consists of a cluster of closely packed pairs of transmembrane channels, the connexons, through which materials of low MW diffuse from one cell to a neighboring cell. The chain is Gap junction gamma-1 protein (GJC1) from Bos taurus (Bovine).